A 108-amino-acid chain; its full sequence is uncharacterized protein (108 aa).

The segment at 81 to 108 is disordered; that stretch reads TNHHQQQQNHQNQQQQQQQPNGIFENNI. Over residues 83–99 the composition is skewed to low complexity; sequence HHQQQQNHQNQQQQQQQ.

This is an uncharacterized protein from Dictyostelium discoideum (Social amoeba).